A 398-amino-acid chain; its full sequence is Serpin-Z1C (398 aa).

The interval 343–367 (GTEAAASTAIKMALLQARPPSVMDF) is RCL.

It belongs to the serpin family.

Its function is as follows. Inhibits chymotrypsin and cathepsin G in vitro. The chain is Serpin-Z1C from Triticum aestivum (Wheat).